We begin with the raw amino-acid sequence, 102 residues long: NADH-quinone oxidoreductase subunit K 2 (102 aa).

Transmembrane regions (helical) follow at residues 5–25 (FEHV…CVLV), 30–50 (LIML…AFVG), and 65–85 (LIIM…VVYL).

Belongs to the complex I subunit 4L family. In terms of assembly, NDH-1 is composed of 14 different subunits. Subunits NuoA, H, J, K, L, M, N constitute the membrane sector of the complex.

Its subcellular location is the cell inner membrane. The enzyme catalyses a quinone + NADH + 5 H(+)(in) = a quinol + NAD(+) + 4 H(+)(out). Its function is as follows. NDH-1 shuttles electrons from NADH, via FMN and iron-sulfur (Fe-S) centers, to quinones in the respiratory chain. The immediate electron acceptor for the enzyme in this species is believed to be ubiquinone. Couples the redox reaction to proton translocation (for every two electrons transferred, four hydrogen ions are translocated across the cytoplasmic membrane), and thus conserves the redox energy in a proton gradient. The sequence is that of NADH-quinone oxidoreductase subunit K 2 from Geobacter sulfurreducens (strain ATCC 51573 / DSM 12127 / PCA).